The primary structure comprises 132 residues: DNA-binding protein inhibitor ID-2 (132 aa).

The region spanning 23–75 (ARSKTPVDDPMSLLYNMNDCYSKLKELVPSIPQNKKVSKMEILQHVIDYILDL) is the bHLH domain. The short motif at 105–114 (LNTDISILSL) is the Nuclear export signal element.

Heterodimer with other HLH proteins.

Its subcellular location is the cytoplasm. The protein resides in the nucleus. Its function is as follows. Transcriptional regulator (lacking a basic DNA binding domain) which negatively regulates the basic helix-loop-helix (bHLH) transcription factors by forming heterodimers and inhibiting their DNA binding and transcriptional activity. Inhibits the activity of both neurogenic (neurod1/neuroD) and myogenic (myod1/myoD) bHLH factors. May play a role in the regulation of the circadian clock. In Xenopus tropicalis (Western clawed frog), this protein is DNA-binding protein inhibitor ID-2.